Reading from the N-terminus, the 107-residue chain is U1-lycotoxin-Ls1e (107 aa).

An N-terminal signal peptide occupies residues 1 to 20 (MMKVLVVFALLVTLISYSSS). Residues 21–41 (EGIDDLEADELLSLMANEQTR) constitute a propeptide that is removed on maturation. 4 cysteine pairs are disulfide-bonded: C44–C59, C51–C68, C58–C86, and C70–C84.

It belongs to the neurotoxin 19 (CSTX) family. 04 (U1-Lctx) subfamily. As to expression, expressed by the venom gland.

It localises to the secreted. The protein is U1-lycotoxin-Ls1e of Lycosa singoriensis (Wolf spider).